A 295-amino-acid chain; its full sequence is Ribosomal RNA small subunit methyltransferase A (295 aa).

Residues Asn-29, Leu-31, Gly-56, Glu-77, Asp-102, and Asn-128 each coordinate S-adenosyl-L-methionine.

The protein belongs to the class I-like SAM-binding methyltransferase superfamily. rRNA adenine N(6)-methyltransferase family. RsmA subfamily.

Its subcellular location is the cytoplasm. It catalyses the reaction adenosine(1518)/adenosine(1519) in 16S rRNA + 4 S-adenosyl-L-methionine = N(6)-dimethyladenosine(1518)/N(6)-dimethyladenosine(1519) in 16S rRNA + 4 S-adenosyl-L-homocysteine + 4 H(+). Specifically dimethylates two adjacent adenosines (A1518 and A1519) in the loop of a conserved hairpin near the 3'-end of 16S rRNA in the 30S particle. May play a critical role in biogenesis of 30S subunits. The polypeptide is Ribosomal RNA small subunit methyltransferase A (Listeria monocytogenes serotype 4b (strain CLIP80459)).